Reading from the N-terminus, the 159-residue chain is 16 kDa outer membrane lipoprotein (159 aa).

The N-terminal stretch at 1–21 (MNKKIFTLFLVVAASAIFAVS) is a signal peptide. The N-palmitoyl cysteine moiety is linked to residue Cys22. Cys22 carries S-diacylglycerol cysteine lipidation.

The protein resides in the cell outer membrane. The sequence is that of 16 kDa outer membrane lipoprotein (smpA) from Brachyspira hyodysenteriae (Treponema hyodysenteriae).